A 790-amino-acid chain; its full sequence is Penicillin-binding protein 1A (790 aa).

Residues 1 to 6 (MYKSLF) lie on the Cytoplasmic side of the membrane. The helical; Signal-anchor for type II membrane protein transmembrane segment at 7 to 27 (FCLKIFAVLILVGCGITAYII) threads the bilayer. Residues 28–790 (YHYSRDLPDY…SKEDQSQEIY (763 aa)) lie on the Periplasmic side of the membrane. The interval 49–220 (TRIYSHDGKL…SELNPERNYA (172 aa)) is transglycosylase. Glutamate 87 serves as the catalytic Proton donor; for transglycosylase activity. The segment at 398-711 (DVIVVEPIKD…SNVVLPIFID (314 aa)) is transpeptidase. Serine 457 serves as the catalytic Acyl-ester intermediate; for transpeptidase activity.

In the N-terminal section; belongs to the glycosyltransferase 51 family. The protein in the C-terminal section; belongs to the transpeptidase family.

The protein resides in the cell inner membrane. It catalyses the reaction [GlcNAc-(1-&gt;4)-Mur2Ac(oyl-L-Ala-gamma-D-Glu-L-Lys-D-Ala-D-Ala)](n)-di-trans,octa-cis-undecaprenyl diphosphate + beta-D-GlcNAc-(1-&gt;4)-Mur2Ac(oyl-L-Ala-gamma-D-Glu-L-Lys-D-Ala-D-Ala)-di-trans,octa-cis-undecaprenyl diphosphate = [GlcNAc-(1-&gt;4)-Mur2Ac(oyl-L-Ala-gamma-D-Glu-L-Lys-D-Ala-D-Ala)](n+1)-di-trans,octa-cis-undecaprenyl diphosphate + di-trans,octa-cis-undecaprenyl diphosphate + H(+). It carries out the reaction Preferential cleavage: (Ac)2-L-Lys-D-Ala-|-D-Ala. Also transpeptidation of peptidyl-alanyl moieties that are N-acyl substituents of D-alanine.. It functions in the pathway cell wall biogenesis; peptidoglycan biosynthesis. In terms of biological role, cell wall formation. Synthesis of cross-linked peptidoglycan from the lipid intermediates. The enzyme has a penicillin-insensitive transglycosylase N-terminal domain (formation of linear glycan strands) and a penicillin-sensitive transpeptidase C-terminal domain (cross-linking of the peptide subunits). This is Penicillin-binding protein 1A (mrcA) from Rickettsia felis (strain ATCC VR-1525 / URRWXCal2) (Rickettsia azadi).